The sequence spans 256 residues: Protein YIPF5 (256 aa).

The Cytoplasmic segment spans residues 1-125; it reads MSNFDNFNTD…ADGSIMNETD (125 aa). Residues 126-146 traverse the membrane as a helical segment; the sequence is LAGPMVFCLAFGATLLLAGKI. Gln-147 is a topological domain (lumenal). A helical membrane pass occupies residues 148–168; the sequence is FGYVYGISAMGCLGMYCLLNL. Residues 169-172 lie on the Cytoplasmic side of the membrane; it reads MSMT. A helical membrane pass occupies residues 173–193; sequence GVSFGCVSSVLGYCLLPMIIL. Topologically, residues 194-195 are lumenal; the sequence is ST. A helical membrane pass occupies residues 196 to 216; that stretch reads FAVIFSLQGILGIVLAALIIG. Over 217 to 235 the chain is Cytoplasmic; it reads WCSFSASKIFISALAMDGQ. A helical membrane pass occupies residues 236–256; sequence QLLVAYPCALLYGVFALISVF.

This sequence belongs to the YIP1 family.

The protein resides in the endoplasmic reticulum membrane. The protein localises to the golgi apparatus. Its subcellular location is the cis-Golgi network membrane. Functionally, plays a role in transport between endoplasmic reticulum and Golgi. The protein is Protein YIPF5 (yipf5) of Xenopus laevis (African clawed frog).